The chain runs to 280 residues: Eukaryotic translation initiation factor 3 subunit F-1 (280 aa).

Residues 8–138 (VRVHPVVLFQ…LRAYVCIQLG (131 aa)) form the MPN domain.

The protein belongs to the eIF-3 subunit F family. As to quaternary structure, component of the eukaryotic translation initiation factor 3 (eIF-3) complex. The eIF-3 complex interacts with pix.

The protein localises to the cytoplasm. Component of the eukaryotic translation initiation factor 3 (eIF-3) complex, which is involved in protein synthesis of a specialized repertoire of mRNAs and, together with other initiation factors, stimulates binding of mRNA and methionyl-tRNAi to the 40S ribosome. The eIF-3 complex specifically targets and initiates translation of a subset of mRNAs involved in cell proliferation. This is Eukaryotic translation initiation factor 3 subunit F-1 from Drosophila willistoni (Fruit fly).